A 234-amino-acid polypeptide reads, in one-letter code: uncharacterized protein (234 aa).

The next 4 membrane-spanning stretches (helical) occupy residues 22 to 42 (TFLNTLIYCILLVIYEYIPLI), 59 to 79 (INWALSFGILPCAFAIFAYLI), 154 to 174 (FWIFFEFSIIALISFLIIFFC), and 186 to 206 (LLSLFFFVILSFSVSGIIFAL).

The protein resides in the cell membrane. This is an uncharacterized protein from Escherichia coli (strain K12).